Here is a 201-residue protein sequence, read N- to C-terminus: Rac-like GTP-binding protein ARAC2 (201 aa).

A GTP-binding site is contributed by 13–20 (GDGAVGKT). The Effector region motif lies at 35–43 (YVPTVFDNF). GTP is bound by residues 60-64 (DTAGQ) and 118-121 (TKLD). Position 198 is a cysteine methyl ester (Cys198). The S-geranylgeranyl cysteine moiety is linked to residue Cys198. Residues 199–201 (FFL) constitute a propeptide, removed in mature form.

It belongs to the small GTPase superfamily. Rho family. In terms of tissue distribution, expressed exclusively in the root, hypocotyl and stem.

Its subcellular location is the cytoplasm. It is found in the membrane. Inactive GDP-bound Rho GTPases reside in the cytosol, are found in a complex with Rho GDP-dissociation inhibitors (Rho GDIs), and are released from the GDI protein in order to translocate to membranes upon activation. In Arabidopsis thaliana (Mouse-ear cress), this protein is Rac-like GTP-binding protein ARAC2 (ARAC2).